Consider the following 1347-residue polypeptide: Protocadherin-11 X-linked (1347 aa).

The first 23 residues, 1–23 (MDLLSGTYIFAVLLACVVFHSGA), serve as a signal peptide directing secretion. Residues 24-812 (QEKNYTIREE…VSSPTNDYVK (789 aa)) are Extracellular-facing. 7 Cadherin domains span residues 26 to 139 (KNYT…APLF), 140 to 249 (PATV…HPVF), 250 to 355 (KETE…VPSI), 362 to 466 (NPVN…APVF), 467 to 570 (TQSF…SPVF), 571 to 673 (THNE…KPVF), and 677 to 795 (PSNY…APVT). Asn27, Asn48, and Asn54 each carry an N-linked (GlcNAc...) asparagine glycan. An N-linked (GlcNAc...) asparagine glycan is attached at Asn344. N-linked (GlcNAc...) asparagine glycosylation is present at Asn553. Asn773 carries an N-linked (GlcNAc...) asparagine glycan. Residues 813–833 (ILVAAVAGTITVVVVIFITAV) form a helical membrane-spanning segment. Residues 834–1347 (VRCRQAPHLK…DSPIMEEHPL (514 aa)) are Cytoplasmic-facing. Disordered stretches follow at residues 1057 to 1091 (LPEG…GYPQ), 1097 to 1116 (RATP…ESTF), and 1326 to 1347 (FTPR…EHPL).

It is found in the cell membrane. In terms of biological role, potential calcium-dependent cell-adhesion protein. The polypeptide is Protocadherin-11 X-linked (PCDH11X) (Gorilla gorilla gorilla (Western lowland gorilla)).